Here is a 396-residue protein sequence, read N- to C-terminus: Elongation factor Tu (396 aa).

Positions lysine 10–glutamate 206 constitute a tr-type G domain. The interval glycine 19–threonine 26 is G1. Glycine 19 to threonine 26 is a binding site for GTP. Threonine 26 is a Mg(2+) binding site. The tract at residues glycine 60–asparagine 64 is G2. Positions aspartate 81 to glycine 84 are G3. GTP is bound by residues aspartate 81–histidine 85 and asparagine 136–aspartate 139. Positions asparagine 136–aspartate 139 are G4. The tract at residues serine 174 to leucine 176 is G5.

The protein belongs to the TRAFAC class translation factor GTPase superfamily. Classic translation factor GTPase family. EF-Tu/EF-1A subfamily. Monomer.

The protein resides in the cytoplasm. It carries out the reaction GTP + H2O = GDP + phosphate + H(+). Its function is as follows. GTP hydrolase that promotes the GTP-dependent binding of aminoacyl-tRNA to the A-site of ribosomes during protein biosynthesis. The protein is Elongation factor Tu of Thiobacillus denitrificans (strain ATCC 25259 / T1).